Consider the following 552-residue polypeptide: Iduronate 2-sulfatase (552 aa).

A signal peptide spans 1–29 (MSPPPPPPIWRQLSFSLLLGSFCIALESA). Residues 30–35 (AQGNSA) constitute a propeptide that is removed on maturation. Ca(2+) contacts are provided by D47, D48, and C86. The active-site Nucleophile is C86. C86 carries the 3-oxoalanine (Cys) modification. Residue N117 is glycosylated (N-linked (GlcNAc...) asparagine). H140 is a catalytic residue. The N-linked (GlcNAc...) asparagine glycan is linked to N146. C173 and C186 form a disulfide bridge. 2 N-linked (GlcNAc...) asparagine glycosylation sites follow: N248 and N282. The Ca(2+) site is built by D336 and H337. C424 and C434 are disulfide-bonded. N-linked (GlcNAc...) asparagine glycans are attached at residues N515 and N539.

Belongs to the sulfatase family. In terms of assembly, monomer. The 58-kDa mature form is composed of two chains resulting from proteolitic processing, the 42-kDa chain and the 14-kDa chain that remain stably associated and form the 58-kDa intermediate form which is enzymatically active. It depends on Ca(2+) as a cofactor. In terms of processing, synthesized as a 75-kDa precursor form in the endoplasmic reticulum (ER), and then processed by proteolytic cleavage through various intermediates to yield a 55-kDa mature form, with the release of an 18 kDa polypeptide. The conversion to 3-oxoalanine (also known as C-formylglycine, FGly), of a serine or cysteine residue in prokaryotes and of a cysteine residue in eukaryotes, is critical for catalytic activity. As to expression, found to be expressed in alpha and beta pancreatic cells.

It localises to the lysosome. The catalysed reaction is Hydrolysis of the 2-sulfate groups of the L-iduronate 2-sulfate units of dermatan sulfate, heparan sulfate and heparin.. In terms of biological role, lysosomal enzyme involved in the degradation pathway of dermatan sulfate and heparan sulfate. This Mus musculus (Mouse) protein is Iduronate 2-sulfatase (Ids).